Reading from the N-terminus, the 138-residue chain is ATP synthase epsilon chain (138 aa).

This sequence belongs to the ATPase epsilon chain family. As to quaternary structure, F-type ATPases have 2 components, CF(1) - the catalytic core - and CF(0) - the membrane proton channel. CF(1) has five subunits: alpha(3), beta(3), gamma(1), delta(1), epsilon(1). CF(0) has three main subunits: a, b and c.

The protein resides in the cell membrane. Its function is as follows. Produces ATP from ADP in the presence of a proton gradient across the membrane. This Streptococcus equi subsp. zooepidemicus (strain H70) protein is ATP synthase epsilon chain.